Reading from the N-terminus, the 109-residue chain is ATPase inhibitor mai-2, mitochondrial (109 aa).

2 disordered regions span residues phenylalanine 18 to aspartate 39 and glutamate 73 to glutamate 109. Positions glycine 21 to glycine 35 are enriched in gly residues. Positions tyrosine 55 to glutamate 109 form a coiled coil.

The protein belongs to the ATPase inhibitor family.

It is found in the mitochondrion. Its function is as follows. Thought to be a regulatory component of the ATP-synthesizing complex in the mitochondria. Activity is pH dependent. In Caenorhabditis elegans, this protein is ATPase inhibitor mai-2, mitochondrial (mai-2).